An 802-amino-acid chain; its full sequence is Xylanase/beta-glucanase (802 aa).

An N-terminal signal peptide occupies residues M1–A31. The region spanning A32–I239 is the GH11 domain. The active-site Nucleophile is the E124. Residue E226 is the Proton donor of the active site. The segment at I245–K523 is b. A CBM-cenC domain is found at N258–K404. 2 disordered regions span residues S414–T436 and T533–L564. 2 stretches are compositionally biased toward low complexity: residues P419–T436 and T533–T553. A Dockerin domain is found at S434–E513. The interval T524–P555 is linker. A GH16 domain is found at A556–Q792. The active-site Nucleophile is E684.

This sequence in the N-terminal section; belongs to the glycosyl hydrolase 11 (cellulase G) family. The protein in the C-terminal section; belongs to the glycosyl hydrolase 16 family.

It carries out the reaction Endohydrolysis of (1-&gt;4)-beta-D-xylosidic linkages in xylans.. The catalysed reaction is Hydrolysis of (1-&gt;4)-beta-D-glucosidic linkages in beta-D-glucans containing (1-&gt;3)- and (1-&gt;4)-bonds.. Its pathway is glycan degradation; xylan degradation. Its function is as follows. Contains two catalytic domains with xylanase and endo-beta-1,3-1,4 glucanase activities. This Ruminococcus flavefaciens protein is Xylanase/beta-glucanase (xynD).